The following is a 221-amino-acid chain: ATP-dependent dethiobiotin synthetase BioD (221 aa).

ATP is bound at residue 11 to 16; that stretch reads GVGKTY. Mg(2+) is bound at residue T15. Residue K36 is part of the active site. T40 serves as a coordination point for substrate. Residues D48 and 107–110 contribute to the ATP site; that span reads EGAG. Mg(2+) contacts are provided by D48 and E107.

It belongs to the dethiobiotin synthetase family. In terms of assembly, homodimer. Mg(2+) is required as a cofactor.

Its subcellular location is the cytoplasm. It carries out the reaction (7R,8S)-7,8-diammoniononanoate + CO2 + ATP = (4R,5S)-dethiobiotin + ADP + phosphate + 3 H(+). It functions in the pathway cofactor biosynthesis; biotin biosynthesis; biotin from 7,8-diaminononanoate: step 1/2. Its function is as follows. Catalyzes a mechanistically unusual reaction, the ATP-dependent insertion of CO2 between the N7 and N8 nitrogen atoms of 7,8-diaminopelargonic acid (DAPA, also called 7,8-diammoniononanoate) to form a ureido ring. This Hydrogenobaculum sp. (strain Y04AAS1) protein is ATP-dependent dethiobiotin synthetase BioD.